Here is a 344-residue protein sequence, read N- to C-terminus: Endo-1,4-beta-xylanase UM03411 (344 aa).

An N-terminal signal peptide occupies residues 1 to 21 (MKTNFLVLLSALLAASSAVTA). Positions 35 to 338 (QRAGSSLNAA…KPAYNAVLST (304 aa)) constitute a GH10 domain. Catalysis depends on E166, which acts as the Proton donor. N-linked (GlcNAc...) asparagine glycosylation occurs at N171. E275 functions as the Nucleophile in the catalytic mechanism. Residues C293 and C299 are joined by a disulfide bond. N-linked (GlcNAc...) asparagine glycans are attached at residues N310 and N323.

It belongs to the glycosyl hydrolase 10 (cellulase F) family.

It is found in the secreted. The enzyme catalyses Endohydrolysis of (1-&gt;4)-beta-D-xylosidic linkages in xylans.. It participates in glycan degradation; xylan degradation. Endo-1,4-beta-xylanase involved in the hydrolysis of xylan, a major structural heterogeneous polysaccharide found in plant biomass representing the second most abundant polysaccharide in the biosphere, after cellulose. This Mycosarcoma maydis (Corn smut fungus) protein is Endo-1,4-beta-xylanase UM03411.